Consider the following 1382-residue polypeptide: MKASAVLAPGILVILFTLVQKSNCECKEALVKSKMNVNMKYQLPNFTAETPIQNVVLHNHHIYLGAVNYIYVLSDKTLQKVAEYKTGPVLEHPDCLPCQDCRHKANLSNGIWKDNINMALLVDTYYDDQLISCGSVHRGTCQRHVLPPNNAADIQSEVHCMYTPQPEEEPSQCPDCVVSALGTKVLLSEKNRFINFFVGNTINSSYLPDHSLHSMSVRRLKETQDGFKFLTDQSYIDVLPEFRDSYPIKYIHAFKSNHFIYFLTVQRETLDAQTFHTRIIRFCSGDSGLHSYMEMPLECILTEKRRKRAAREEVFNILQAAYVSKPGAHLARQIGASLNDDILYGVFAQSKPDSAEPMNRSAVCAFPIKYVNEFFNKIVNKNNVRCLQHFYGPNHEHCFNRTLLRNSSSCDVRSDEYRTEFTTALQRVDLFMGQFNQVLLTSISTFIKGDLTIANLGTSEGRFMQVVVSRLGSSTPHVNFRLDSHPVSPEVIVEHPLNGNDYTLVVTGKKITKIPLNGLGCEHFQSCSQCLSAPAFVQCGWCHDKCVQLEECPSGTWTQETCLPTIYKVLPTSAPLEGGTTLTICGWDFGFRRNNKFDLKKTRVFLGNESCTVTLSESSTNMLKCTVGPALYEHFNMSIIISNSRGTVQYSTFSYVDPIITSISPTYGPKTGGTLLTLTGKYLDSGNSRHISIGGKTCTLKSVSNSILECYTPPQTTSTEFPVKLKIDLANRNTYSFSYQEDPIIYKIHPIKSFISGGSTITGVGKNLNSVSVLRMVINVHEAGRNFTVACQHRSNSEIICCTTPSLQQLDLQLPLTTRAFFMLDGIHSRYFDLIYVHNPMFKVFEKPVKISIGIENILEIKGNDIDPEAVKGEVLKVGNKSCENIHSYSETVLCTVPNDLLKLNSELNIEWKQAVTSTVLGKVIVQPDQNITEFIVGILSISGILLTLLGLLLWWKKKKQIKDLGSELVRYDARVHTPHLDRLVSARSVSPTTEMVSNESVDYRATFPEDQFPNSSQNGSCRQVQYPLTDLSPILTSGDSDISSPLLQNTVHIDLSALNPELVQAVQHVVIGPSSLIVHFNEVIGRGHFGCVYHGTLLDNDDKKIHCAVKSLNRITDIGEVSQFLTEGIIMKDFSHPNVLSLLGICLRSEGSPLVVLPYMKHGDLRNFIRNETHNPTVKDLIGFGLQVAKGMKYLASKKFVHRDLAARNCMLDENFTVKVADFGLARDMYDKEYYSVHNKTGAKLPVKWMALESLQTQKFTTKSDVWSFGVLLWELMTRGAPPYPDVNTFDITVYLLQGRRLLQPEYCPDPLYEVMLKCWHPKAELRPSFSELVSRISAIFSTFIGEHYVHVNATYVNIKCVAPYPSLLSSQDNFDSEGNT.

The signal sequence occupies residues 1–24; the sequence is MKASAVLAPGILVILFTLVQKSNC. Residues 25–933 are Extracellular-facing; that stretch reads ECKEALVKSK…VIVQPDQNIT (909 aa). Positions 27–516 constitute a Sema domain; the sequence is KEALVKSKMN…TGKKITKIPL (490 aa). Asn-45 is a glycosylation site (N-linked (GlcNAc...) asparagine). 4 disulfide bridges follow: Cys-95–Cys-101, Cys-98–Cys-160, Cys-133–Cys-141, and Cys-173–Cys-176. Asn-106 is a glycosylation site (N-linked (GlcNAc...) asparagine). 2 N-linked (GlcNAc...) asparagine glycosylation sites follow: Asn-203 and Asn-359. 2 cysteine pairs are disulfide-bonded: Cys-299-Cys-364 and Cys-386-Cys-398. N-linked (GlcNAc...) asparagine glycosylation is found at Asn-400 and Asn-406. Intrachain disulfides connect Cys-521-Cys-539, Cys-527-Cys-562, Cys-530-Cys-546, and Cys-542-Cys-552. IPT/TIG domains lie at 564–656, 658–740, and 743–837; these read PTIY…FSYV, PIIT…FSYQ, and PIIY…LIYV. Thr-583 carries an O-linked (Man) threonine glycan. N-linked (GlcNAc...) asparagine glycosylation is found at Asn-608 and Asn-636. O-linked (Man) threonine glycans are attached at residues Thr-677 and Thr-762. 3 N-linked (GlcNAc...) asparagine glycosylation sites follow: Asn-786, Asn-880, and Asn-931. A helical membrane pass occupies residues 934–956; it reads EFIVGILSISGILLTLLGLLLWW. At 957–1382 the chain is on the cytoplasmic side; the sequence is KKKKQIKDLG…QDNFDSEGNT (426 aa). Ser-967 bears the Phosphoserine mark. At Thr-978 the chain carries Phosphothreonine. Phosphoserine occurs at positions 991, 998, and 1001. Tyr-1004 carries the post-translational modification Phosphotyrosine. A Protein kinase domain is found at 1079–1346; the sequence is VHFNEVIGRG…RISAIFSTFI (268 aa). ATP-binding positions include 1085–1093 and Lys-1111; that span reads IGRGHFGCV. The active-site Proton acceptor is Asp-1205. The tract at residues 1213–1382 is interaction with RANBP9; that stretch reads LDENFTVKVA…QDNFDSEGNT (170 aa). Tyr-1231 carries the phosphotyrosine modification. Residues Tyr-1235 and Tyr-1236 each carry the phosphotyrosine; by autocatalysis modification. Thr-1290 carries the phosphothreonine modification. The interaction with MUC20 stretch occupies residues 1321–1360; the sequence is WHPKAELRPSFSELVSRISAIFSTFIGEHYVHVNATYVNI. A phosphotyrosine; by autocatalysis mark is found at Tyr-1350 and Tyr-1357. The residue at position 1366 (Tyr-1366) is a Phosphotyrosine.

This sequence belongs to the protein kinase superfamily. Tyr protein kinase family. As to quaternary structure, heterodimer made of an alpha chain (50 kDa) and a beta chain (145 kDa) which are disulfide linked. Binds PLXNB1. Interacts when phosphorylated with downstream effectors including STAT3, PIK3R1, SRC, PCLG1, GRB2 and GAB1. Interacts with SPSB1, SPSB2 and SPSB4. Interacts with INPP5D/SHIP1. When phosphorylated at Tyr-1357, interacts with INPPL1/SHIP2. Interacts with RANBP9 and RANBP10, as well as SPSB1, SPSB2, SPSB3 and SPSB4. SPSB1 binding occurs in the presence and in the absence of HGF, however HGF treatment has a positive effect on this interaction. Interacts with MUC20; prevents interaction with GRB2 and suppresses hepatocyte growth factor-induced cell proliferation. Interacts with GRB10. Interacts with PTPN1 and PTPN2. Interacts with tensin TNS3. Interacts (when phosphorylated) with tensin TNS4 (via SH2 domain); the interaction increases MET protein stability by inhibiting MET endocytosis and subsequent lysosomal degradation. Autophosphorylated in response to ligand binding on Tyr-1235 and Tyr-1236 in the kinase domain leading to further phosphorylation of Tyr-1350 and Tyr-1357 in the C-terminal multifunctional docking site. Dephosphorylated by PTPRJ at Tyr-1350 and Tyr-1366. Dephosphorylated by PTPN1 and PTPN2. Post-translationally, ubiquitinated. Ubiquitination by CBL regulates the receptor stability and activity through proteasomal degradation. In terms of processing, O-mannosylation of IPT/TIG domains by TMEM260 is required for protein maturation. O-mannosylated residues are composed of single mannose glycans that are not elongated or modified.

Its subcellular location is the membrane. The enzyme catalyses L-tyrosyl-[protein] + ATP = O-phospho-L-tyrosyl-[protein] + ADP + H(+). In its inactive state, the C-terminal tail interacts with the catalytic domain and inhibits the kinase activity. Upon ligand binding, the C-terminal tail is displaced and becomes phosphorylated, thus increasing the kinase activity. Functionally, receptor tyrosine kinase that transduces signals from the extracellular matrix into the cytoplasm by binding to hepatocyte growth factor/HGF ligand. Regulates many physiological processes including proliferation, scattering, morphogenesis and survival. Ligand binding at the cell surface induces autophosphorylation of MET on its intracellular domain that provides docking sites for downstream signaling molecules. Following activation by ligand, interacts with the PI3-kinase subunit PIK3R1, PLCG1, SRC, GRB2, STAT3 or the adapter GAB1. Recruitment of these downstream effectors by MET leads to the activation of several signaling cascades including the RAS-ERK, PI3 kinase-AKT, or PLCgamma-PKC. The RAS-ERK activation is associated with the morphogenetic effects while PI3K/AKT coordinates prosurvival effects. During embryonic development, MET signaling plays a role in gastrulation, development and migration of muscles and neuronal precursors, angiogenesis and kidney formation. In adults, participates in wound healing as well as organ regeneration and tissue remodeling. Also promotes differentiation and proliferation of hematopoietic cells. This chain is Hepatocyte growth factor receptor (MET), found in Atelerix albiventris (Middle-African hedgehog).